The sequence spans 208 residues: F-box/kelch-repeat protein At2g43270 (208 aa).

The 44-residue stretch at 1 to 44 (MIYVVPDLLEEIFLGLPLKSILRFKTVSKQWRSILESKSFAERR) folds into the F-box domain. The stretch at 149 to 200 (RDKFNGSYKVVRMCFSPVEKCEVLDVETGEWSELNPPPNDIDVGRKSVCVNG) is one Kelch repeat.

In Arabidopsis thaliana (Mouse-ear cress), this protein is F-box/kelch-repeat protein At2g43270.